A 62-amino-acid polypeptide reads, in one-letter code: DNA-binding protein 7 (62 aa).

This sequence belongs to the 7 kDa DNA-binding/endoribonuclease P2 family. As to quaternary structure, monomer.

The protein resides in the cytoplasm. Functionally, can constrain negative DNA supercoils. May be involved in maintaining the integrity of the genome at high temperature. The protein is DNA-binding protein 7 of Metallosphaera sedula (strain ATCC 51363 / DSM 5348 / JCM 9185 / NBRC 15509 / TH2).